A 496-amino-acid chain; its full sequence is Polyamine oxidase 6 (496 aa).

Residues 1–27 form the signal peptide; the sequence is MTKPTTMAIFLVLALSIAQLLPSLVAG. FAD is bound by residues Glu-61 and Arg-69. N-linked (GlcNAc...) asparagine glycosylation is found at Asn-103 and Asn-150. Val-261 contacts FAD. Asn-278 carries N-linked (GlcNAc...) asparagine glycosylation. Glu-454 is an FAD binding site.

The protein belongs to the flavin monoamine oxidase family. It depends on FAD as a cofactor.

Its subcellular location is the secreted. It localises to the extracellular space. The protein localises to the apoplast. It participates in amine and polyamine degradation; spermine degradation. In terms of biological role, flavoenzyme involved in polyamine back-conversion. Catalyzes the oxidation of the secondary amino group of polyamines, such as spermine and spermidine. This Oryza sativa subsp. japonica (Rice) protein is Polyamine oxidase 6.